A 355-amino-acid chain; its full sequence is Peptide chain release factor 1 (355 aa).

Gln-231 carries the post-translational modification N5-methylglutamine. Positions 283–292 are enriched in basic and acidic residues; it reads LAKETSERKS. Residues 283-306 form a disordered region; the sequence is LAKETSERKSQVGTGDRSGRIRTY.

It belongs to the prokaryotic/mitochondrial release factor family. In terms of processing, methylated by PrmC. Methylation increases the termination efficiency of RF1.

Its subcellular location is the cytoplasm. Its function is as follows. Peptide chain release factor 1 directs the termination of translation in response to the peptide chain termination codons UAG and UAA. The protein is Peptide chain release factor 1 of Campylobacter concisus (strain 13826).